A 275-amino-acid polypeptide reads, in one-letter code: Undecaprenyl-diphosphatase (275 aa).

7 helical membrane-spanning segments follow: residues 8–28 (WTIV…PIPI), 45–65 (ARGL…VLII), 92–112 (FMFV…GVLF), 119–139 (FIGE…AAAI), 197–217 (FSFL…IPNI), 225–245 (ELWI…YFAL), and 255–275 (GNLK…LIFL).

The protein belongs to the UppP family.

It localises to the cell membrane. The catalysed reaction is di-trans,octa-cis-undecaprenyl diphosphate + H2O = di-trans,octa-cis-undecaprenyl phosphate + phosphate + H(+). In terms of biological role, catalyzes the dephosphorylation of undecaprenyl diphosphate (UPP). Confers resistance to bacitracin. The chain is Undecaprenyl-diphosphatase from Oceanobacillus iheyensis (strain DSM 14371 / CIP 107618 / JCM 11309 / KCTC 3954 / HTE831).